A 130-amino-acid chain; its full sequence is Small ribosomal subunit protein uS11 (130 aa).

Belongs to the universal ribosomal protein uS11 family. Part of the 30S ribosomal subunit. Interacts with proteins S7 and S18. Binds to IF-3.

Functionally, located on the platform of the 30S subunit, it bridges several disparate RNA helices of the 16S rRNA. Forms part of the Shine-Dalgarno cleft in the 70S ribosome. The chain is Small ribosomal subunit protein uS11 from Prochlorococcus marinus (strain MIT 9515).